A 320-amino-acid polypeptide reads, in one-letter code: Pantothenate kinase (320 aa).

96-103 lines the ATP pocket; the sequence is GSVAVGKS.

Belongs to the prokaryotic pantothenate kinase family.

It is found in the cytoplasm. The catalysed reaction is (R)-pantothenate + ATP = (R)-4'-phosphopantothenate + ADP + H(+). It participates in cofactor biosynthesis; coenzyme A biosynthesis; CoA from (R)-pantothenate: step 1/5. This Brevibacillus brevis (strain 47 / JCM 6285 / NBRC 100599) protein is Pantothenate kinase.